Reading from the N-terminus, the 284-residue chain is MEMO1 family protein YG5714_2180 (284 aa).

The protein belongs to the MEMO1 family.

The polypeptide is MEMO1 family protein YG5714_2180 (Saccharolobus islandicus (strain Y.G.57.14 / Yellowstone #1) (Sulfolobus islandicus)).